We begin with the raw amino-acid sequence, 88 residues long: Small ribosomal subunit protein uS15 (88 aa).

This sequence belongs to the universal ribosomal protein uS15 family. As to quaternary structure, part of the 30S ribosomal subunit. Forms a bridge to the 50S subunit in the 70S ribosome, contacting the 23S rRNA.

One of the primary rRNA binding proteins, it binds directly to 16S rRNA where it helps nucleate assembly of the platform of the 30S subunit by binding and bridging several RNA helices of the 16S rRNA. Functionally, forms an intersubunit bridge (bridge B4) with the 23S rRNA of the 50S subunit in the ribosome. The chain is Small ribosomal subunit protein uS15 from Borreliella burgdorferi (strain ATCC 35210 / DSM 4680 / CIP 102532 / B31) (Borrelia burgdorferi).